A 34-amino-acid polypeptide reads, in one-letter code: Toxin Ptu1 (34 aa).

Disulfide bonds link Cys5–Cys20, Cys12–Cys26, and Cys19–Cys33.

The protein resides in the secreted. Its function is as follows. Binds reversibly and blocks N-type voltage-gated calcium channels (Cav). The chain is Toxin Ptu1 from Peirates turpis (Assassin bug).